The primary structure comprises 92 residues: uncharacterized protein (92 aa).

Helical transmembrane passes span 1-21 (MNIYVWLFAIIALSFSALVGL), 30-50 (ANVLVGESIITVVAGTLIVVI), and 62-82 (IALAIFICGVVGAFAFCKVIG).

This sequence to M.thermoautotrophicum MTH1250.

The protein resides in the cell membrane. This is an uncharacterized protein from Methanocaldococcus jannaschii (strain ATCC 43067 / DSM 2661 / JAL-1 / JCM 10045 / NBRC 100440) (Methanococcus jannaschii).